Consider the following 20-residue polypeptide: Alkaline phosphatase (20 aa).

The segment at 1–20 is disordered; sequence TDMLAVSVSSTDAIGHKYGT.

Homodimer; may be disulfide-linked. The N-terminus is blocked.

The catalysed reaction is a phosphate monoester + H2O = an alcohol + phosphate. Completely inhibited by thiol-reducing agents, such as DTT and 2-mercaptoethanol. Activity was also inhibited by sodium orthovanadate, sodium molybdate, N-ethylmaleimide, EDTA and zinc ion, but was not inhibited by okadaic acid. Its function is as follows. Acts against tyrosine-phosphatases. The chain is Alkaline phosphatase from Prevotella intermedia.